The chain runs to 718 residues: Ribonuclease J (718 aa).

Positions 1–130 (MNDSRNRGRK…RGNRGGGRRN (130 aa)) are disordered. Low complexity-rich tracts occupy residues 55-91 (AAQG…NNNR) and 100-118 (SGNA…NRQG). His220, His222, Asp224, His225, His287, and Asp309 together coordinate Zn(2+). A substrate-binding site is contributed by 510 to 514 (HTSGH). Position 536 (His536) interacts with Zn(2+).

It belongs to the metallo-beta-lactamase superfamily. RNA-metabolizing metallo-beta-lactamase-like family. Bacterial RNase J subfamily. In terms of assembly, homodimer, may be a subunit of the RNA degradosome. Zn(2+) serves as cofactor.

Its subcellular location is the cytoplasm. In terms of biological role, an RNase that has 5'-3' exonuclease and possibly endoonuclease activity. Involved in maturation of rRNA and in some organisms also mRNA maturation and/or decay. This Corynebacterium glutamicum (strain ATCC 13032 / DSM 20300 / JCM 1318 / BCRC 11384 / CCUG 27702 / LMG 3730 / NBRC 12168 / NCIMB 10025 / NRRL B-2784 / 534) protein is Ribonuclease J.